A 185-amino-acid polypeptide reads, in one-letter code: Ribosome-recycling factor (185 aa).

The protein belongs to the RRF family.

The protein resides in the cytoplasm. Responsible for the release of ribosomes from messenger RNA at the termination of protein biosynthesis. May increase the efficiency of translation by recycling ribosomes from one round of translation to another. The protein is Ribosome-recycling factor of Pseudomonas aeruginosa (strain LESB58).